A 231-amino-acid polypeptide reads, in one-letter code: NADH-ubiquinone oxidoreductase chain 4 (231 aa).

A run of 7 helical transmembrane segments spans residues 1 to 21, 34 to 54, 63 to 85, 89 to 111, 128 to 148, 169 to 189, and 211 to 231; these read PIAG…YGII, MFLP…LTCL, IAYS…TPWG, AMAL…NTTY, ILPM…ATPP, TIIL…HMFL, and LLMT…ELVI.

The protein belongs to the complex I subunit 4 family.

It is found in the mitochondrion membrane. It carries out the reaction a ubiquinone + NADH + 5 H(+)(in) = a ubiquinol + NAD(+) + 4 H(+)(out). In terms of biological role, core subunit of the mitochondrial membrane respiratory chain NADH dehydrogenase (Complex I) that is believed to belong to the minimal assembly required for catalysis. Complex I functions in the transfer of electrons from NADH to the respiratory chain. The immediate electron acceptor for the enzyme is believed to be ubiquinone. The protein is NADH-ubiquinone oxidoreductase chain 4 (MT-ND4) of Porthidium ophryomegas (Slender hognose viper).